The primary structure comprises 262 residues: MKNIHQTAVIEDGAIIGDDANIEAYAFVSKDAVLGNNVTIKQGARVLGKTRIGDNSRVFSYAIVGDIPQDISYKDEVDTGVIIGEHATIREFCTINSGTHKGDGITRIGDNAFIMAYSHIAHDCIIGSNVILANNATLAGHVELGDYAVVGGLTPIHQFVRVGESCMVAGASALSQDVVPFCLAEGNRAYIRSLNLVGIRRRFDKEQVEELVRAYKFLFNQGISLKDQANELIAKTSDENVKKMCKFILETTRGIPLAKGRD.

This sequence belongs to the transferase hexapeptide repeat family. LpxA subfamily. As to quaternary structure, homotrimer.

It localises to the cytoplasm. It carries out the reaction a (3R)-hydroxyacyl-[ACP] + UDP-N-acetyl-alpha-D-glucosamine = a UDP-3-O-[(3R)-3-hydroxyacyl]-N-acetyl-alpha-D-glucosamine + holo-[ACP]. It participates in glycolipid biosynthesis; lipid IV(A) biosynthesis; lipid IV(A) from (3R)-3-hydroxytetradecanoyl-[acyl-carrier-protein] and UDP-N-acetyl-alpha-D-glucosamine: step 1/6. Functionally, involved in the biosynthesis of lipid A, a phosphorylated glycolipid that anchors the lipopolysaccharide to the outer membrane of the cell. This Campylobacter concisus (strain 13826) protein is Acyl-[acyl-carrier-protein]--UDP-N-acetylglucosamine O-acyltransferase.